An 85-amino-acid polypeptide reads, in one-letter code: IVGGRAAEPHSRPYMVSLQIRGNPGSHFCGGTLIMGWGRLGTREPLPXVLQELNVTVVTAGICFGDSGGPLICNGVAQGVFSFVR.

The Peptidase S1 domain occupies 1-85; that stretch reads IVGGRAAEPH…VAQGVFSFVR (85 aa). S67 acts as the Charge relay system in catalysis.

The protein belongs to the peptidase S1 family. Elastase subfamily.

Its function is as follows. May be involved in the degradation of connective tissue in chronic lung disease. The chain is Neutrophil elastase 2A from Equus caballus (Horse).